Reading from the N-terminus, the 300-residue chain is ADP-polyphosphate phosphotransferase 1 (300 aa).

It belongs to the polyphosphate kinase 2 (PPK2) family. Class I subfamily. In terms of assembly, homotetramer. Requires Mg(2+) as cofactor.

The enzyme catalyses [phosphate](n) + ATP = [phosphate](n+1) + ADP. It catalyses the reaction [phosphate](n) + GTP = [phosphate](n+1) + GDP. Uses inorganic polyphosphate (polyP) as a donor to convert ADP to ATP. Can also convert GDP to GTP, with lower efficiency. Cannot dephosphorylate ATP in the presence of polyP. The sequence is that of ADP-polyphosphate phosphotransferase 1 from Rhizobium meliloti (strain 1021) (Ensifer meliloti).